Consider the following 664-residue polypeptide: MSLQRIVRVSLEHPTSAVCVAGVETIVDIYGAVPEGTDMFEVYGTPGVDIYVSPSMERSRERADTRRWCFNKGLEIIVIMNSPSNDLNDSHVQIAYHSSREHLPLAYAVLYLTCVDITLDCDMNCADRQDRSFVDKRQWVWGPDGYGAILLVNCDRDNVDSNAQDNCDQYVRCLQDLEDMSVMVLRTQGPEALFEDHRLILHTSSCDAERARVFHVCGPEDSCESYKCVLGPDRMSYEVPRLKGYEERFFVEGLSFPDAGFPGLISFHVTLLDDSNEDFSETPIFTDTAVFRVAPWIMTPSTLPPLEVYVCRVRNNTCFVEAVEELARKAGCKLTICPQAENRNDRWIQDEMELGYVQAPHKTLPVVFDSPRNGELQGFPYKRILGLDFGYVTREPKDSSVSGLDSFGNLEVSPPVVANGKEYPLGRILIGGNLPGSRGRRVTQVVRNFLHAQKVQPLVELFVDWLAVGHVDEFLSFVPAPDGKGFRLLLASPGACFRLFQEKQKWGHGRSLLFEGVIGDRRVQTVSINQILNNQSLINFNKFAQSCIDWNREVLKRELGLAEGDIIDIPQLFKTEKRKAVAFFPDLVNMLVLGKHLGIPKPFGPIINGRCCLEEKVRSLLEPLGLHCTFIDDFTPYHMLHGEVHCGTNVRREPFAFKWWHMVP.

This sequence belongs to the protein arginine deiminase family. Ca(2+) is required as a cofactor. In terms of tissue distribution, epidermis and hair follicles.

The protein resides in the cytoplasm. It catalyses the reaction L-arginyl-[protein] + H2O = L-citrullyl-[protein] + NH4(+). Catalyzes the deimination of arginine residues of proteins. The protein is Protein-arginine deiminase type-3 (Padi3) of Mus musculus (Mouse).